Consider the following 462-residue polypeptide: Serine--tRNA ligase, cytoplasmic (462 aa).

K241 participates in a covalent cross-link: Glycyl lysine isopeptide (Lys-Gly) (interchain with G-Cter in URM1). Residue 246 to 248 (TSE) coordinates L-serine. Residues 279–281 (RRE) and V295 each bind ATP. E302 lines the L-serine pocket. Residues K350 and K351 each participate in a glycyl lysine isopeptide (Lys-Gly) (interchain with G-Cter in URM1) cross-link. 366–369 (ELVS) contacts ATP. Cysteine persulfide is present on residues C373 and C400. T404 contributes to the L-serine binding site.

This sequence belongs to the class-II aminoacyl-tRNA synthetase family. Type-1 seryl-tRNA synthetase subfamily. As to quaternary structure, homodimer; the tRNA molecule probably binds across the dimer. Interacts with ABP140; interaction is required for the tRNA N(3)-methylcytidine methyltransferase activity of ABP140. In terms of processing, conjugated to URM1, a ubiquitin-like protein, in response to oxidative stresses. The attachment of URM1 to lysine residues exclusively depends on the presence of a peroxidatic cysteine in the target protein, with low specificity for the particular residue, motif, or structural context at which urmylation can occur. The URM1-conjugation reaction is mechanistically and directly coupled to the process of cysteine persulfidation, transfering the sulfur atom of the URM1 thiocarboxyl group to redox-active cysteine residues in the target protein if it is exposed to oxidative conditions. Persulfidated on specific redox-active cysteine residues. Persulfidation (also called protein S-sulfhydration) may provide a molecular mechanism that enables cells to protect vulnerable cysteine residues from reactive oxygen species (ROS) under stress conditions.

The protein localises to the cytoplasm. The protein resides in the cytosol. It carries out the reaction tRNA(Ser) + L-serine + ATP = L-seryl-tRNA(Ser) + AMP + diphosphate + H(+). Functionally, catalyzes the attachment of serine to tRNA(Ser) in a two-step reaction: serine is first activated by ATP to form Ser-AMP and then transferred to the acceptor end of tRNA(Ser). This chain is Serine--tRNA ligase, cytoplasmic (SES1), found in Saccharomyces cerevisiae (strain ATCC 204508 / S288c) (Baker's yeast).